Consider the following 182-residue polypeptide: Thioredoxin F-type, chloroplastic (182 aa).

The interval 1–22 is disordered; sequence MPLSLRLAPSPTALSPTTGGFS. Residues 52–177 form the Thioredoxin domain; the sequence is KRGDSSVVRC…LVAAIETARS (126 aa). Catalysis depends on nucleophile residues C102 and C105. The cysteines at positions 102 and 105 are disulfide-linked.

This sequence belongs to the thioredoxin family. Plant F-type subfamily. In terms of assembly, forms a complex with heterodimeric ferredoxin-thioredoxin reductase (FTR) and ferredoxin.

The protein resides in the plastid. Its subcellular location is the chloroplast. In terms of biological role, participates in various redox reactions through the reversible oxidation of the active center dithiol to a disulfide. The F form is known to activate a number of enzymes of the photosynthetic carbon cycle. The protein is Thioredoxin F-type, chloroplastic (TRXF) of Brassica napus (Rape).